The sequence spans 541 residues: Cyclin-T1-4 (541 aa).

A disordered region spans residues 277-366; it reads VSEVESSVGG…KSRSGVEAPG (90 aa). The span at 307–325 shows a compositional bias: polar residues; it reads SDNLGGSTKATQNRSNDNG. Positions 336-354 are enriched in basic and acidic residues; sequence QKGERDTETKDSMHTESHP. Ser396 is subject to Phosphoserine. A disordered region spans residues 445 to 541; it reads EDDKDIQNKS…REPRRHSQER (97 aa). The segment covering 493–511 has biased composition (basic and acidic residues); the sequence is MESPCEKQLGEGKRRHDNS. A compositionally biased stretch (polar residues) spans 519–528; sequence KTNPGGSSHS. The span at 529 to 541 shows a compositional bias: basic and acidic residues; that stretch reads YGDREPRRHSQER.

It belongs to the cyclin family. Cyclin T subfamily.

The protein is Cyclin-T1-4 (CYCT1-4) of Arabidopsis thaliana (Mouse-ear cress).